We begin with the raw amino-acid sequence, 498 residues long: Aspartyl/glutamyl-tRNA(Asn/Gln) amidotransferase subunit B (498 aa).

Belongs to the GatB/GatE family. GatB subfamily. In terms of assembly, heterotrimer of A, B and C subunits.

The enzyme catalyses L-glutamyl-tRNA(Gln) + L-glutamine + ATP + H2O = L-glutaminyl-tRNA(Gln) + L-glutamate + ADP + phosphate + H(+). It catalyses the reaction L-aspartyl-tRNA(Asn) + L-glutamine + ATP + H2O = L-asparaginyl-tRNA(Asn) + L-glutamate + ADP + phosphate + 2 H(+). Its function is as follows. Allows the formation of correctly charged Asn-tRNA(Asn) or Gln-tRNA(Gln) through the transamidation of misacylated Asp-tRNA(Asn) or Glu-tRNA(Gln) in organisms which lack either or both of asparaginyl-tRNA or glutaminyl-tRNA synthetases. The reaction takes place in the presence of glutamine and ATP through an activated phospho-Asp-tRNA(Asn) or phospho-Glu-tRNA(Gln). The sequence is that of Aspartyl/glutamyl-tRNA(Asn/Gln) amidotransferase subunit B from Caulobacter vibrioides (strain ATCC 19089 / CIP 103742 / CB 15) (Caulobacter crescentus).